A 764-amino-acid polypeptide reads, in one-letter code: Subtilisin-like protease SBT3.1 (764 aa).

An N-terminal signal peptide occupies residues 1–32 (MIQTLKTDSSFRLCFAAIAFGFVFIMNGKLSS). A propeptide spans 33–120 (GTTPHEFPVY…LLENRKLGLQ (88 aa)) (activation peptide). One can recognise an Inhibitor I9 domain in the interval 41 to 116 (VYIFYLGERK…EVIILLENRK (76 aa)). An N-linked (GlcNAc...) asparagine glycan is attached at asparagine 76. A Peptidase S8 domain is found at 124–610 (TWDYLGQFST…GGLVNLEKAT (487 aa)). The active-site Charge relay system is aspartate 156. Asparagine 216 carries N-linked (GlcNAc...) asparagine glycosylation. Histidine 230 acts as the Charge relay system in catalysis. Asparagine 245 and asparagine 374 each carry an N-linked (GlcNAc...) asparagine glycan. Residue serine 541 is the Charge relay system of the active site. Residues asparagine 674, asparagine 711, and asparagine 747 are each glycosylated (N-linked (GlcNAc...) asparagine).

Belongs to the peptidase S8 family.

The protein resides in the secreted. This chain is Subtilisin-like protease SBT3.1, found in Arabidopsis thaliana (Mouse-ear cress).